The sequence spans 100 residues: Urease subunit gamma (100 aa).

Belongs to the urease gamma subunit family. In terms of assembly, heterotrimer of UreA (gamma), UreB (beta) and UreC (alpha) subunits. Three heterotrimers associate to form the active enzyme.

The protein localises to the cytoplasm. It catalyses the reaction urea + 2 H2O + H(+) = hydrogencarbonate + 2 NH4(+). The protein operates within nitrogen metabolism; urea degradation; CO(2) and NH(3) from urea (urease route): step 1/1. The protein is Urease subunit gamma of Yersinia rohdei.